The following is a 149-amino-acid chain: MWPPKHAHIGWLSSLALVVLLMSLQMVMVSGIECYVCDTSDTEHPFQCGEWFERYDIPDIQPQNCSSVHGAQFCVKHVGRFEGGIGAKRFCSSKDMGNYCDYVRNKGDRMDYRSCIYTCDTDGCNAAGRLELEWGVAAALLTLTWLLRH.

An N-terminal signal peptide occupies residues 1 to 31 (MWPPKHAHIGWLSSLALVVLLMSLQMVMVSG). Residues 32-126 (IECYVCDTSD…YTCDTDGCNA (95 aa)) lie on the Extracellular side of the membrane. Cystine bridges form between cysteine 34/cysteine 74, cysteine 37/cysteine 48, cysteine 65/cysteine 91, cysteine 100/cysteine 115, and cysteine 119/cysteine 124. Asparagine 64 carries N-linked (GlcNAc...) asparagine glycosylation. Residue asparagine 125 is the site of GPI-anchor amidated asparagine attachment. A propeptide spans 126–149 (AAGRLELEWGVAAALLTLTWLLRH) (removed in mature form). The chain crosses the membrane as a helical span at residues 127–147 (AGRLELEWGVAAALLTLTWLL). Residues 148–149 (RH) are Cytoplasmic-facing.

Post-translationally, GPI-anchored.

It is found in the cell membrane. The protein resides in the cell junction. Its subcellular location is the septate junction. The protein localises to the cytoplasm. It localises to the cell cortex. It is found in the secreted. The protein resides in the apicolateral cell membrane. Its function is as follows. Involved in tracheal paracellular barrier functions mediated by epithelial cell septate junctions. Involved in paracellular barrier functions mediated by glial cell septate junctions in the peripheral nervous system, including the chordotonal organs, but not the hemolymph-brain barrier (the insect blood-brain barrier) of the central nervous system. Required for septate junction assembly, possibly by organizing the preassembly and transport of septate junction proteins such as dlg1/disks large 1, Nrx-IV/Neurexin-IV and the claudin protein kune. Involved in chitin fiber organization during tracheal development. Secreted, possibly in association with extracellular vesicles, to act non-autonomously on tissues distant from its site of expression. This Drosophila melanogaster (Fruit fly) protein is UPAR/Ly6 domain-containing protein bou.